A 342-amino-acid chain; its full sequence is Inositol-tetrakisphosphate 1-kinase 5 (342 aa).

1D-myo-inositol 1,3,4-trisphosphate-binding residues include Lys25 and Lys67. ATP-binding residues include Arg102 and Lys154. Residues His165 and Lys197 each contribute to the 1D-myo-inositol 1,3,4-trisphosphate site. ATP-binding positions include 186-197 (QEFVNHGGVIFK) and Ser212. Positions 283, 298, and 300 each coordinate Mg(2+). Residue Asn300 participates in 1D-myo-inositol 1,3,4-trisphosphate binding.

It belongs to the ITPK1 family. In terms of assembly, monomer. Requires Mg(2+) as cofactor. Expressed in roots, leaves, flowers, anthers and embryos.

It carries out the reaction 1D-myo-inositol 3,4,5,6-tetrakisphosphate + ATP = 1D-myo-inositol 1,3,4,5,6-pentakisphosphate + ADP + H(+). The catalysed reaction is 1D-myo-inositol 1,3,4-trisphosphate + ATP = 1D-myo-inositol 1,3,4,5-tetrakisphosphate + ADP + H(+). It catalyses the reaction 1D-myo-inositol 1,3,4-trisphosphate + ATP = 1D-myo-inositol 1,3,4,6-tetrakisphosphate + ADP + H(+). Functionally, kinase that can phosphorylate various inositol polyphosphate such as Ins(3,4,5,6)P4 or Ins(1,3,4)P3 and participates in phytic acid biosynthesis in developing seeds. Phytic acid is the primary storage form of phosphorus in cereal grains and other plant seeds. This chain is Inositol-tetrakisphosphate 1-kinase 5 (ITPK5), found in Oryza sativa subsp. japonica (Rice).